The chain runs to 124 residues: uncharacterized protein (124 aa).

2 disordered regions span residues 1–31 (MAQHAFQDQEQEEGRNSRQQKRKSFEDTMKP) and 59–124 (EDAR…YPQP). Polar residues-rich tracts occupy residues 65 to 86 (GMSSVTPTSSASKIGTKTSDAA) and 98 to 124 (TGEQPSGIQAQNLRGQSSDQSACYPQP).

This is an uncharacterized protein from Bos taurus (Bovine).